Here is a 206-residue protein sequence, read N- to C-terminus: Protein-methionine-sulfoxide reductase heme-binding subunit MsrQ (206 aa).

6 helical membrane-spanning segments follow: residues 14–34, 45–65, 82–102, 118–138, 149–169, and 179–199; these read IKPLLFVAGLLPFARWFWLGA, FLTRSSGTWTLVCLLVTLAIT, MCGLFAFFYGSLHFLAWVWWD, PFITVGFAAFVLMAALAATST, WQTLHRAVYAIGLLAILHFWW, and QPLLYGSVLALLLGWRVAAWW.

It belongs to the MsrQ family. Heterodimer of a catalytic subunit (MsrP) and a heme-binding subunit (MsrQ). The cofactor is FMN. Heme b serves as cofactor.

It localises to the cell inner membrane. In terms of biological role, part of the MsrPQ system that repairs oxidized periplasmic proteins containing methionine sulfoxide residues (Met-O), using respiratory chain electrons. Thus protects these proteins from oxidative-stress damage caused by reactive species of oxygen and chlorine generated by the host defense mechanisms. MsrPQ is essential for the maintenance of envelope integrity under bleach stress, rescuing a wide series of structurally unrelated periplasmic proteins from methionine oxidation. MsrQ provides electrons for reduction to the reductase catalytic subunit MsrP, using the quinone pool of the respiratory chain. This chain is Protein-methionine-sulfoxide reductase heme-binding subunit MsrQ, found in Bordetella pertussis (strain Tohama I / ATCC BAA-589 / NCTC 13251).